The following is a 473-amino-acid chain: MAAPAKRARVSGGSPLVAPCPSPRAARAPLPLPAGSSGGEPEGDAVAGFLRWCRRVGLELSPKVTVSRQGTVAGYGMVARESVRAGELLFAVPRSALLSPHTCSISGLLERERGALQSLSGWVPLLLALLHELQAPASPWSPYFALWPELGRLEHPMFWPEEERLRLLKGTGVPEAVEKDLVNIRSEYYSIVLPFMEAHSDLFSPSVRSLELYQQLVALVMAYSFQEPLEEDDDEKEPNSPLMVPAADILNHIANHNANLEYSADYLRMVATQPILEGHEIFNTYGQMANWQLIHMYGFAEPYPNNTDDTADIQMVTVRDAALQGTKDETEKLLVCERWDFLCKQEMVGEEGAFVIGCEEVLTEEELATTLKVLCMPAEEFRDYKERAGWGEEETEDDSLAITDIPKLQESWKRLLRNSVLLTLQTYTTDLKTDQDLLSNKEAYATLSWREQQALQVRYGQKMILHRVLELTN.

The disordered stretch occupies residues 1-23 (MAAPAKRARVSGGSPLVAPCPSP). Ser14 and Ser22 each carry phosphoserine. The SET domain occupies 62-286 (PKVTVSRQGT…EGHEIFNTYG (225 aa)). Lys63 is modified (N6-methylated lysine; by autocatalysis). 73–75 (AGY) is an S-adenosyl-L-methionine binding site. Substrate is bound at residue Trp122. Lys179 bears the N6-methylated lysine; by autocatalysis mark. Residue Tyr223 coordinates S-adenosyl-L-methionine. Residues Ser224 and Gln226 each coordinate substrate. S-adenosyl-L-methionine-binding positions include 251–252 (NH) and Tyr297. Lys372 is subject to N6-methylated lysine; by autocatalysis.

The protein belongs to the class V-like SAM-binding methyltransferase superfamily. Histone-lysine methyltransferase family. SETD6 subfamily. In terms of assembly, monomer, homodimer and homotrimer; these structures are stabilized in the presence of S-adenosyl-L-methionine (SAM). Automethylated.

The protein resides in the nucleus. It carries out the reaction L-lysyl-[protein] + S-adenosyl-L-methionine = N(6)-methyl-L-lysyl-[protein] + S-adenosyl-L-homocysteine + H(+). The catalysed reaction is L-lysyl(8)-[histone H2AZ] + S-adenosyl-L-methionine = N(6)-methyl-L-lysyl(8)-[histone H2AZ] + S-adenosyl-L-homocysteine + H(+). In terms of biological role, protein-lysine N-methyltransferase. Monomethylates 'Lys-310' of the RELA subunit of NF-kappa-B complex, leading to down-regulation of NF-kappa-B transcription factor activity. Monomethylates 'Lys-8' of H2AZ (H2AZK8me1). Required for the maintenance of embryonic stem cell self-renewal. Methylates PAK4. This chain is N-lysine methyltransferase SETD6 (Setd6), found in Mus musculus (Mouse).